We begin with the raw amino-acid sequence, 316 residues long: Transaldolase (316 aa).

Lys-131 serves as the catalytic Schiff-base intermediate with substrate.

The protein belongs to the transaldolase family. Type 1 subfamily. Homodimer.

The protein resides in the cytoplasm. The enzyme catalyses D-sedoheptulose 7-phosphate + D-glyceraldehyde 3-phosphate = D-erythrose 4-phosphate + beta-D-fructose 6-phosphate. It functions in the pathway carbohydrate degradation; pentose phosphate pathway; D-glyceraldehyde 3-phosphate and beta-D-fructose 6-phosphate from D-ribose 5-phosphate and D-xylulose 5-phosphate (non-oxidative stage): step 2/3. In terms of biological role, transaldolase is important for the balance of metabolites in the pentose-phosphate pathway. The chain is Transaldolase from Glaesserella parasuis serovar 5 (strain SH0165) (Haemophilus parasuis).